The following is a 418-amino-acid chain: Cyclin-dependent kinase 15 (418 aa).

The region spanning 84–369 is the Protein kinase domain; sequence YLNLEKLGEG…AQDALLHPYF (286 aa). Residues 90-98 and Lys-113 each bind ATP; that span reads LGEGTYATV. Asp-205 functions as the Proton acceptor in the catalytic mechanism.

It belongs to the protein kinase superfamily. CMGC Ser/Thr protein kinase family. CDC2/CDKX subfamily. The cofactor is Mg(2+).

The catalysed reaction is L-seryl-[protein] + ATP = O-phospho-L-seryl-[protein] + ADP + H(+). It carries out the reaction L-threonyl-[protein] + ATP = O-phospho-L-threonyl-[protein] + ADP + H(+). Its function is as follows. Serine/threonine-protein kinase involved in the control of the eukaryotic cell cycle, whose activity is controlled by an associated cyclin. In Danio rerio (Zebrafish), this protein is Cyclin-dependent kinase 15 (cdk15).